The primary structure comprises 157 residues: Endoribonuclease YbeY (157 aa).

Zn(2+)-binding residues include His-115, His-119, and His-125.

Belongs to the endoribonuclease YbeY family. It depends on Zn(2+) as a cofactor.

The protein resides in the cytoplasm. Single strand-specific metallo-endoribonuclease involved in late-stage 70S ribosome quality control and in maturation of the 3' terminus of the 16S rRNA. The polypeptide is Endoribonuclease YbeY (Micrococcus luteus (strain ATCC 4698 / DSM 20030 / JCM 1464 / CCM 169 / CCUG 5858 / IAM 1056 / NBRC 3333 / NCIMB 9278 / NCTC 2665 / VKM Ac-2230) (Micrococcus lysodeikticus)).